The sequence spans 522 residues: Acetylcholine receptor subunit delta (522 aa).

Residues 1–21 form the signal peptide; sequence MGNIHFVYLLISCLYYSGCSG. Residues 22 to 245 lie on the Extracellular side of the membrane; the sequence is VNEEERLIND…VTFYLIIRRK (224 aa). N-linked (GlcNAc...) asparagine glycans are attached at residues Asn-91, Asn-164, and Asn-229. The cysteines at positions 151 and 165 are disulfide-linked. The next 3 helical transmembrane spans lie at 246–270, 278–295, and 312–333; these read PLFY…AFYL, MSTA…LLLT, and YLMF…VLNF. Over 334–476 the chain is Cytoplasmic; the sequence is HFRTPSTHVL…WNLVGQTIDR (143 aa). Tyr-393 is modified (phosphotyrosine; by Tyr-kinases). A helical transmembrane segment spans residues 477–497; it reads LSMFIITPVMVLGTIFIFVMG.

Belongs to the ligand-gated ion channel (TC 1.A.9) family. Acetylcholine receptor (TC 1.A.9.1) subfamily. Pentamer of two alpha chains, and one each of the beta, delta, and gamma chains.

The protein localises to the postsynaptic cell membrane. It is found in the cell membrane. The enzyme catalyses K(+)(in) = K(+)(out). The catalysed reaction is Na(+)(in) = Na(+)(out). Functionally, after binding acetylcholine, the AChR responds by an extensive change in conformation that affects all subunits and leads to opening of an ion-conducting channel across the plasma membrane. The polypeptide is Acetylcholine receptor subunit delta (chrnd) (Tetronarce californica (Pacific electric ray)).